The following is a 125-amino-acid chain: Protein ELF4-LIKE 1 (125 aa).

Polar residues predominate over residues 1 to 18 (MEASRNRSLVGNNRSPEM). The tract at residues 1-28 (MEASRNRSLVGNNRSPEMNENDGEDVAA) is disordered.

The protein belongs to the EARLY FLOWERING 4 family. In terms of assembly, homodimer.

It localises to the nucleus. Functionally, component of the central CCA1/LHY-TOC1 feedback loop in the circadian clock that promotes clock accuracy and is required for sustained rhythms in the absence of daily light/dark cycles. This chain is Protein ELF4-LIKE 1 (EFL1), found in Arabidopsis thaliana (Mouse-ear cress).